A 700-amino-acid polypeptide reads, in one-letter code: Methionine--tRNA ligase (700 aa).

The short motif at 14–24 (PYANGPVHLGH) is the 'HIGH' region element. Residues C146, C149, C159, and C162 each contribute to the Zn(2+) site. The 'KMSKS' region motif lies at 343–347 (KFSKS). K346 contacts ATP. The tRNA-binding domain maps to 599 to 700 (EFEKIDLRVA…GDSIVGKPVK (102 aa)).

Belongs to the class-I aminoacyl-tRNA synthetase family. MetG type 1 subfamily. In terms of assembly, homodimer. Requires Zn(2+) as cofactor.

It localises to the cytoplasm. It catalyses the reaction tRNA(Met) + L-methionine + ATP = L-methionyl-tRNA(Met) + AMP + diphosphate. In terms of biological role, is required not only for elongation of protein synthesis but also for the initiation of all mRNA translation through initiator tRNA(fMet) aminoacylation. This is Methionine--tRNA ligase from Chloroherpeton thalassium (strain ATCC 35110 / GB-78).